We begin with the raw amino-acid sequence, 191 residues long: Cathelicidin-related peptide Oh-Cath (191 aa).

Residues 1 to 22 (MEGFFWKTLLVVGALAIGGTSS) form the signal peptide. A propeptide spanning residues 23 to 161 (LPHKPLTYEE…DQPRRVKRFK (139 aa)) is cleaved from the precursor. 2 disulfide bridges follow: cysteine 81–cysteine 92 and cysteine 103–cysteine 120. The segment covering 125 to 151 (EEEEQKQEEGNEEEKEVEKEEKEEDEK) has biased composition (acidic residues). Residues 125-154 (EEEEQKQEEGNEEEKEVEKEEKEEDEKDQP) form a disordered region.

This sequence belongs to the cathelicidin family. In terms of tissue distribution, expressed by the venom gland.

The protein resides in the secreted. It is found in the target cell membrane. Its function is as follows. Potent antimicrobial peptide against Gram-negative (MIC=0.25 ug/ml against E.coli ATCC 25922, MIC=0.5 ug/ml against P.aeruginosa) and Gram-positive bacteria (MIC=64 ug/ml against E.faecalis, MIC=64 ug/ml against S.aureus). Adopts an amphipathic alpha helical conformation, that may allow to partition into the target membrane. Low hemolytic activities have been observed on mammalian cells. The polypeptide is Cathelicidin-related peptide Oh-Cath (Ophiophagus hannah (King cobra)).